The following is a 241-amino-acid chain: Uridylate kinase (241 aa).

An ATP-binding site is contributed by 15–18 (KMSG). UMP is bound at residue Gly-57. Residues Gly-58 and Arg-62 each coordinate ATP. Residues Asp-77 and 138–145 (TGNPFFTT) contribute to the UMP site. 3 residues coordinate ATP: Thr-165, Tyr-171, and Asp-174.

Belongs to the UMP kinase family. As to quaternary structure, homohexamer.

Its subcellular location is the cytoplasm. It carries out the reaction UMP + ATP = UDP + ADP. It functions in the pathway pyrimidine metabolism; CTP biosynthesis via de novo pathway; UDP from UMP (UMPK route): step 1/1. Inhibited by UTP. Functionally, catalyzes the reversible phosphorylation of UMP to UDP. The polypeptide is Uridylate kinase (Dichelobacter nodosus (strain VCS1703A)).